The sequence spans 254 residues: PF03932 family protein CutC (254 aa).

The protein belongs to the CutC family.

It is found in the cytoplasm. In Yersinia enterocolitica serotype O:8 / biotype 1B (strain NCTC 13174 / 8081), this protein is PF03932 family protein CutC.